We begin with the raw amino-acid sequence, 75 residues long: Conotoxin Im23.5 (75 aa).

The signal sequence occupies residues 1 to 23 (MKFFTCLLLLLVVLTVVFDNVDA). 3 disulfide bridges follow: cysteine 24/cysteine 28, cysteine 37/cysteine 40, and cysteine 41/cysteine 43. Positions 24-50 (CDRSCTGVMGHPSCATCCACFTSAGKR) are excised as a propeptide.

In terms of tissue distribution, expressed by the venom duct.

It localises to the secreted. In terms of biological role, probable neurotoxin. The chain is Conotoxin Im23.5 from Conus imperialis (Imperial cone).